The sequence spans 544 residues: ATP synthase subunit alpha (544 aa).

Residue 173-180 (GDRQTGKT) coordinates ATP. A disordered region spans residues 513 to 544 (GSDGQIIGGGEPESDGEDVDVEQEQIVRQKRG). A compositionally biased stretch (acidic residues) spans 524–535 (PESDGEDVDVEQ).

Belongs to the ATPase alpha/beta chains family. In terms of assembly, F-type ATPases have 2 components, CF(1) - the catalytic core - and CF(0) - the membrane proton channel. CF(1) has five subunits: alpha(3), beta(3), gamma(1), delta(1), epsilon(1). CF(0) has three main subunits: a(1), b(2) and c(9-12). The alpha and beta chains form an alternating ring which encloses part of the gamma chain. CF(1) is attached to CF(0) by a central stalk formed by the gamma and epsilon chains, while a peripheral stalk is formed by the delta and b chains.

Its subcellular location is the cell membrane. The enzyme catalyses ATP + H2O + 4 H(+)(in) = ADP + phosphate + 5 H(+)(out). In terms of biological role, produces ATP from ADP in the presence of a proton gradient across the membrane. The alpha chain is a regulatory subunit. The polypeptide is ATP synthase subunit alpha (Beutenbergia cavernae (strain ATCC BAA-8 / DSM 12333 / CCUG 43141 / JCM 11478 / NBRC 16432 / NCIMB 13614 / HKI 0122)).